The chain runs to 63 residues: Large ribosomal subunit protein bL28 (63 aa).

This sequence belongs to the bacterial ribosomal protein bL28 family.

This chain is Large ribosomal subunit protein bL28, found in Thermomicrobium roseum (strain ATCC 27502 / DSM 5159 / P-2).